The following is a 343-amino-acid chain: Plasminogen (343 aa).

Kringle domains follow at residues 1–17 (APQA…DCML) and 41–120 (AQEP…GCVA). Positions 1 to 140 (APQAPSVENP…LRRRSREHFC (140 aa)) are plasmin heavy chain A. 3 disulfides stabilise this stretch: C15-C94, C36-C77, and C65-C89. Residues 114–341 (VVGGCVATPH…YVPWIEETMR (228 aa)) enclose the Peptidase S1 domain. Residue S130 is modified to Phosphoserine. C140 and C156 are oxidised to a cystine. The tract at residues 141-343 (GGTLISPEWV…PWIEETMRRY (203 aa)) is plasmin light chain B. Active-site charge relay system residues include H155 and D198. Phosphoserine is present on S221. Cystine bridges form between C232–C299, C262–C278, and C289–C317. The active-site Charge relay system is the S293.

The protein belongs to the peptidase S1 family. Plasminogen subfamily. Interacts with CSPG4 and AMOT. Interacts (via the Kringle domains) with HRG; the interaction tethers PLG to the cell surface and enhances its activation. Interacts (via Kringle 4 domain) with ADA; the interaction stimulates PLG activation when in complex with DPP4. Angiostatin: Interacts with ATP5F1A; the interaction inhibits most of the angiogenic effects of angiostatin.

The protein resides in the secreted. It catalyses the reaction Preferential cleavage: Lys-|-Xaa &gt; Arg-|-Xaa, higher selectivity than trypsin. Converts fibrin into soluble products.. Its activity is regulated as follows. Converted into plasmin by plasminogen activators, both plasminogen and its activator being bound to fibrin. Cannot be activated with streptokinase. Plasmin dissolves the fibrin of blood clots and acts as a proteolytic factor in a variety of other processes including embryonic development, tissue remodeling, tumor invasion, and inflammation. In ovulation, weakens the walls of the Graafian follicle. It activates the urokinase-type plasminogen activator, collagenases and several complement zymogens, such as C1, C4 and C5. Cleavage of fibronectin and laminin leads to cell detachment and apoptosis. Also cleaves fibrin, thrombospondin and von Willebrand factor. Its role in tissue remodeling and tumor invasion may be modulated by CSPG4. Binds to cells. This chain is Plasminogen (PLG), found in Ovis aries (Sheep).